Consider the following 414-residue polypeptide: Serine hydroxymethyltransferase (414 aa).

(6S)-5,6,7,8-tetrahydrofolate is bound by residues L116 and 120–122 (GHL). K224 is modified (N6-(pyridoxal phosphate)lysine). (6S)-5,6,7,8-tetrahydrofolate is bound by residues E240 and 348–350 (SPF).

Belongs to the SHMT family. Homodimer. It depends on pyridoxal 5'-phosphate as a cofactor.

The protein resides in the cytoplasm. The catalysed reaction is (6R)-5,10-methylene-5,6,7,8-tetrahydrofolate + glycine + H2O = (6S)-5,6,7,8-tetrahydrofolate + L-serine. It functions in the pathway one-carbon metabolism; tetrahydrofolate interconversion. The protein operates within amino-acid biosynthesis; glycine biosynthesis; glycine from L-serine: step 1/1. In terms of biological role, catalyzes the reversible interconversion of serine and glycine with tetrahydrofolate (THF) serving as the one-carbon carrier. This reaction serves as the major source of one-carbon groups required for the biosynthesis of purines, thymidylate, methionine, and other important biomolecules. Also exhibits THF-independent aldolase activity toward beta-hydroxyamino acids, producing glycine and aldehydes, via a retro-aldol mechanism. The polypeptide is Serine hydroxymethyltransferase (Campylobacter concisus (strain 13826)).